Consider the following 476-residue polypeptide: MQVSEILNSGLKREIKITVPAEDMEARLMARLEDAKNKVRLKGFRPGKVPLQHLRRMYGKSFMAEVVNEILNDSSRTIISDRGEKPAMQPEISMTEDEKEAEKVLAGAADFEFSLSYEVIPPIEIKDLAGIKITRPVYDVPDEEVDEQVKRVADSVRTYEAKKGKAEKGDKVTLDYVGKLDGEPFDGGSANDSEVVIGHGQFIPGFEDELIGLKAGDTKTFKITFPETYGAQHLAGKEAEFDVTVKEVAAAEELVIDDELAKKLGLESAEKLREIIRSQLENQYGQMTRQKAKRQLLDALDESYKFEAPSKLVEAEFNNIWSQVTRDLESAGRTFEDEETTEDDARQEYQRLAERRVRLGLVLAQIGEEASIQVSDDEMQRALIETIRRYPAQQQQEIYDFYRQNPQALASVRAPLFEEKVVDQLLSQVDVTDQKVSRDELLAEDEAEGEEKKAAGETKKKAAPKKKAAKKESAAE.

Positions 169–254 (GDKVTLDYVG…VKEVAAAEEL (86 aa)) constitute a PPIase FKBP-type domain. A disordered region spans residues 437–476 (SRDELLAEDEAEGEEKKAAGETKKKAAPKKKAAKKESAAE). A compositionally biased stretch (basic and acidic residues) spans 450–460 (EEKKAAGETKK).

This sequence belongs to the FKBP-type PPIase family. Tig subfamily.

It is found in the cytoplasm. It catalyses the reaction [protein]-peptidylproline (omega=180) = [protein]-peptidylproline (omega=0). In terms of biological role, involved in protein export. Acts as a chaperone by maintaining the newly synthesized protein in an open conformation. Functions as a peptidyl-prolyl cis-trans isomerase. The sequence is that of Trigger factor from Chelativorans sp. (strain BNC1).